The chain runs to 503 residues: ATP synthase subunit alpha (503 aa).

Residue 170–177 participates in ATP binding; it reads GDRKTGKT.

It belongs to the ATPase alpha/beta chains family. As to quaternary structure, F-type ATPases have 2 components, CF(1) - the catalytic core - and CF(0) - the membrane proton channel. CF(1) has five subunits: alpha(3), beta(3), gamma(1), delta(1), epsilon(1). CF(0) has four main subunits: a, b, b' and c.

The protein resides in the cellular thylakoid membrane. It carries out the reaction ATP + H2O + 4 H(+)(in) = ADP + phosphate + 5 H(+)(out). In terms of biological role, produces ATP from ADP in the presence of a proton gradient across the membrane. The alpha chain is a regulatory subunit. This is ATP synthase subunit alpha from Gloeothece citriformis (strain PCC 7424) (Cyanothece sp. (strain PCC 7424)).